Here is a 298-residue protein sequence, read N- to C-terminus: NADH-cytochrome b5 reductase 2 (298 aa).

A helical membrane pass occupies residues 13–33; that stretch reads FLPFAIGAVAVTAGALYLNGW. An FAD-binding FR-type domain is found at 48–152; it reads RKWIDLELEK…QGPIPKWQWK (105 aa). 155-190 is an FAD binding site; it reads SFDTITLLGGGTGITPLYQLVHHITQNKEDKTKINL.

Belongs to the flavoprotein pyridine nucleotide cytochrome reductase family. FAD serves as cofactor.

It localises to the mitochondrion outer membrane. It carries out the reaction 2 Fe(III)-[cytochrome b5] + NADH = 2 Fe(II)-[cytochrome b5] + NAD(+) + H(+). In terms of biological role, may mediate the reduction of outer membrane cytochrome b5. In Candida glabrata (strain ATCC 2001 / BCRC 20586 / JCM 3761 / NBRC 0622 / NRRL Y-65 / CBS 138) (Yeast), this protein is NADH-cytochrome b5 reductase 2 (MCR1).